A 666-amino-acid polypeptide reads, in one-letter code: Pentatricopeptide repeat-containing protein At1g64100 (666 aa).

15 PPR repeats span residues 105 to 139, 140 to 174, 175 to 209, 225 to 259, 260 to 294, 295 to 329, 330 to 364, 365 to 399, 400 to 430, 431 to 465, 466 to 500, 501 to 535, 536 to 570, 571 to 605, and 606 to 640; these read TAVD…RIPL, NIYS…GFQP, DVVT…GFLE, VVIT…GLHI, DVVT…HIKP, DVVI…GIAP, NVFT…EINP, DVLT…CIFP, DTVT…MASP, DVVT…GLVA, NTTT…GVCP, DTIT…KIDL, DTVA…GVEP, DVQT…GHEP, and DNST…GFSG.

It belongs to the PPR family. P subfamily.

This chain is Pentatricopeptide repeat-containing protein At1g64100, found in Arabidopsis thaliana (Mouse-ear cress).